A 207-amino-acid chain; its full sequence is Small ribosomal subunit protein uS4 (207 aa).

Residues 30–53 (DKSKFDTKPGQHGRTSGQRTSDFG) form a disordered region. Polar residues predominate over residues 42–52 (GRTSGQRTSDF). Residues 97 to 157 (SRLDNVVYRM…EKSKKQARIV (61 aa)) form the S4 RNA-binding domain.

It belongs to the universal ribosomal protein uS4 family. As to quaternary structure, part of the 30S ribosomal subunit. Contacts protein S5. The interaction surface between S4 and S5 is involved in control of translational fidelity.

One of the primary rRNA binding proteins, it binds directly to 16S rRNA where it nucleates assembly of the body of the 30S subunit. Its function is as follows. With S5 and S12 plays an important role in translational accuracy. In Delftia acidovorans (strain DSM 14801 / SPH-1), this protein is Small ribosomal subunit protein uS4.